The primary structure comprises 185 residues: Peptidyl-tRNA hydrolase (185 aa).

Y14 is a binding site for tRNA. The Proton acceptor role is filled by H19. 3 residues coordinate tRNA: F64, N66, and N112.

The protein belongs to the PTH family. In terms of assembly, monomer.

The protein resides in the cytoplasm. It catalyses the reaction an N-acyl-L-alpha-aminoacyl-tRNA + H2O = an N-acyl-L-amino acid + a tRNA + H(+). Functionally, hydrolyzes ribosome-free peptidyl-tRNAs (with 1 or more amino acids incorporated), which drop off the ribosome during protein synthesis, or as a result of ribosome stalling. Its function is as follows. Catalyzes the release of premature peptidyl moieties from peptidyl-tRNA molecules trapped in stalled 50S ribosomal subunits, and thus maintains levels of free tRNAs and 50S ribosomes. The protein is Peptidyl-tRNA hydrolase of Levilactobacillus brevis (strain ATCC 367 / BCRC 12310 / CIP 105137 / JCM 1170 / LMG 11437 / NCIMB 947 / NCTC 947) (Lactobacillus brevis).